The following is a 384-amino-acid chain: S-adenosylmethionine synthase (384 aa).

An ATP-binding site is contributed by histidine 15. Mg(2+) is bound at residue aspartate 17. Glutamate 43 provides a ligand contact to K(+). Positions 56 and 99 each coordinate L-methionine. Residues 99–109 form a flexible loop region; that stretch reads QSPDINQGVDR. Residues 164–166, 230–231, aspartate 239, 245–246, alanine 262, and lysine 266 each bind ATP; these read DAK, RF, and RK. An L-methionine-binding site is contributed by aspartate 239. Lysine 270 serves as a coordination point for L-methionine.

The protein belongs to the AdoMet synthase family. Homotetramer; dimer of dimers. It depends on Mg(2+) as a cofactor. Requires K(+) as cofactor.

It localises to the cytoplasm. It catalyses the reaction L-methionine + ATP + H2O = S-adenosyl-L-methionine + phosphate + diphosphate. The protein operates within amino-acid biosynthesis; S-adenosyl-L-methionine biosynthesis; S-adenosyl-L-methionine from L-methionine: step 1/1. In terms of biological role, catalyzes the formation of S-adenosylmethionine (AdoMet) from methionine and ATP. The overall synthetic reaction is composed of two sequential steps, AdoMet formation and the subsequent tripolyphosphate hydrolysis which occurs prior to release of AdoMet from the enzyme. The protein is S-adenosylmethionine synthase of Enterobacter sp. (strain 638).